A 1103-amino-acid polypeptide reads, in one-letter code: Platelet-derived growth factor receptor beta (1103 aa).

The signal sequence occupies residues 1–31 (MQVPGTMPAPVLKGQALWLPLLLMLSPQASG). Ig-like C2-type domains lie at 33–120 (LVIT…YIFV), 129–210 (PVDP…YSLQ), 214–309 (INVS…INVT), 331–403 (HRSR…HEDA), and 416–524 (PVRV…VTVV). The Extracellular portion of the chain corresponds to 33–532 (LVITPPGPEL…VVPHSLPFKV (500 aa)). 2 N-linked (GlcNAc...) asparagine glycosylation sites follow: Asn-45 and Asn-89. Intrachain disulfides connect Cys-54–Cys-100 and Cys-149–Cys-190. N-linked (GlcNAc...) asparagine glycosylation is found at Asn-215 and Asn-230. Cys-235 and Cys-291 are disulfide-bonded. Residues Asn-292, Asn-307, Asn-354, Asn-371, Asn-468, and Asn-479 are each glycosylated (N-linked (GlcNAc...) asparagine). Cysteines 436 and 508 form a disulfide. The chain crosses the membrane as a helical span at residues 533–553 (VVISAILALVVLTIISLIILI). Over 554–1103 (MLWQKKPRYE…PRAEAEDSFL (550 aa)) the chain is Cytoplasmic. Tyr-562, Tyr-579, and Tyr-581 each carry phosphotyrosine; by autocatalysis. The Protein kinase domain occupies 600–962 (LVLGRTLGSG…QLVLLLERLL (363 aa)). Residues 606–614 (LGSGAFGQV) and Lys-634 each bind ATP. Tyr-686 bears the Phosphotyrosine; by ABL1 and ABL2 mark. Residues Tyr-716, Tyr-740, Tyr-751, Tyr-763, Tyr-771, Tyr-775, and Tyr-778 each carry the phosphotyrosine; by autocatalysis modification. Asp-826 acts as the Proton acceptor in catalysis. Residue Tyr-857 is modified to Phosphotyrosine; by autocatalysis. 2 positions are modified to phosphotyrosine; by ABL1 and ABL2: Tyr-934 and Tyr-970. Phosphotyrosine; by autocatalysis is present on residues Tyr-1009 and Tyr-1021. Residues 1017 to 1103 (GDNDYIIPLP…PRAEAEDSFL (87 aa)) are disordered. Residues 1039-1059 (SSPSLASSTLNEVNTSSTISC) show a composition bias toward polar residues. The segment covering 1065 to 1075 (PQEEPEPEPEP) has biased composition (acidic residues). Residues 1076–1086 (QPEPQVVPEPP) show a composition bias toward pro residues.

The protein belongs to the protein kinase superfamily. Tyr protein kinase family. CSF-1/PDGF receptor subfamily. In terms of assembly, interacts with homodimeric PDGFB and PDGFD, and with heterodimers formed by PDGFA and PDGFB. May also interact with homodimeric PDGFC. Monomer in the absence of bound ligand. Interaction with homodimeric PDGFB, heterodimers formed by PDGFA and PDGFB or homodimeric PDGFD, leads to receptor dimerization, where both PDGFRA homodimers and heterodimers with PDGFRB are observed. Interacts with SH2B2/APS. Interacts directly (tyrosine phosphorylated) with SHB. Interacts (tyrosine phosphorylated) with PIK3R1 and RASA1. Interacts (tyrosine phosphorylated) with CBL. Interacts (tyrosine phosphorylated) with SRC and SRC family kinases. Interacts (tyrosine phosphorylated) with PIK3C2B, maybe indirectly. Interacts (tyrosine phosphorylated) with SHC1, GRB7, GRB10 and NCK1. Interaction with GRB2 is mediated by SHC1. Interacts (via C-terminus) with NHERF1. In terms of processing, N-glycosylated. Ubiquitinated. After autophosphorylation, the receptor is polyubiquitinated, leading to its degradation. Post-translationally, autophosphorylated on tyrosine residues upon ligand binding. Autophosphorylation occurs in trans, i.e. one subunit of the dimeric receptor phosphorylates tyrosine residues on the other subunit. Phosphorylation at Tyr-579, and to a lesser degree, Tyr-581 is important for interaction with SRC. Phosphorylation at Tyr-716 is important for interaction with GRB2. Phosphorylation at Tyr-740 and Tyr-751 is important for interaction with PIK3R1. Phosphorylation at Tyr-751 is important for interaction with NCK1. Phosphorylation at Tyr-771 and Tyr-857 is important for interaction with RASA1/GAP. Phosphorylation at Tyr-857 is important for efficient phosphorylation of PLCG1 and PTPN11, resulting in increased phosphorylation of AKT1, MAPK1/ERK2 and/or MAPK3/ERK1, PDCD6IP/ALIX and STAM, and in increased cell proliferation. Phosphorylation at Tyr-1009 is important for interaction with PTPN11. Phosphorylation at Tyr-1009 and Tyr-1021 is important for interaction with PLCG1. Dephosphorylated by PTPRJ at Tyr-751, Tyr-857, Tyr-1009 and Tyr-1021. Dephosphorylated by PTPN2 at Tyr-579 and Tyr-1021.

It localises to the cell membrane. The protein resides in the cytoplasmic vesicle. The protein localises to the lysosome lumen. It catalyses the reaction L-tyrosyl-[protein] + ATP = O-phospho-L-tyrosyl-[protein] + ADP + H(+). Present in an inactive conformation in the absence of bound ligand. Binding of PDGFB and/or PDGFD leads to dimerization and activation by autophosphorylation on tyrosine residues. Its function is as follows. Tyrosine-protein kinase that acts as a cell-surface receptor for homodimeric PDGFB and PDGFD and for heterodimers formed by PDGFA and PDGFB, and plays an essential role in the regulation of embryonic development, cell proliferation, survival, differentiation, chemotaxis and migration. Plays an essential role in blood vessel development by promoting proliferation, migration and recruitment of pericytes and smooth muscle cells to endothelial cells. Plays a role in the migration of vascular smooth muscle cells and the formation of neointima at vascular injury sites. Required for normal development of the cardiovascular system. Required for normal recruitment of pericytes (mesangial cells) in the kidney glomerulus, and for normal formation of a branched network of capillaries in kidney glomeruli. Promotes rearrangement of the actin cytoskeleton and the formation of membrane ruffles. Binding of its cognate ligands - homodimeric PDGFB, heterodimers formed by PDGFA and PDGFB or homodimeric PDGFD -leads to the activation of several signaling cascades; the response depends on the nature of the bound ligand and is modulated by the formation of heterodimers between PDGFRA and PDGFRB. Phosphorylates PLCG1, PIK3R1, PTPN11, RASA1/GAP, CBL, SHC1 and NCK1. Activation of PLCG1 leads to the production of the cellular signaling molecules diacylglycerol and inositol 1,4,5-trisphosphate, mobilization of cytosolic Ca(2+) and the activation of protein kinase C. Phosphorylation of PIK3R1, the regulatory subunit of phosphatidylinositol 3-kinase, leads to the activation of the AKT1 signaling pathway. Phosphorylation of SHC1, or of the C-terminus of PTPN11, creates a binding site for GRB2, resulting in the activation of HRAS, RAF1 and down-stream MAP kinases, including MAPK1/ERK2 and/or MAPK3/ERK1. Promotes phosphorylation and activation of SRC family kinases. Promotes phosphorylation of PDCD6IP/ALIX and STAM. Receptor signaling is down-regulated by protein phosphatases that dephosphorylate the receptor and its down-stream effectors, and by rapid internalization of the activated receptor. This Canis lupus familiaris (Dog) protein is Platelet-derived growth factor receptor beta (PDGFRB).